A 246-amino-acid polypeptide reads, in one-letter code: MLEQVCQLARNAGDAIMQVYDGAKPMEYARKQDDSPVTAADIAAHTVILEGLRTLTPDIPVLSEEDPPAWEVRQHWQRYWLVDPLDGTKEFIKRNGEFTVNIALIEQGKPVLGVVYAPVLKVMYYAAEGKAWKEECGVRKQIQVRDARPPLVVISRSHTDDELTEYLQQLGEHQTTSIGSSLKFCLVAEGQAQLYPRFGPTSVWDTAAGHAIAVAAGAHVHDWQGKTLDYTPRESFLNPGFRVTIY.

Mg(2+) contacts are provided by Glu64, Asp83, Leu85, Asp86, and Asp205. Glu64 contributes to the substrate binding site. Residues Leu85–Thr88 and Asp205 each bind substrate.

This sequence belongs to the inositol monophosphatase superfamily. CysQ family. Mg(2+) is required as a cofactor.

Its subcellular location is the cell inner membrane. It carries out the reaction adenosine 3',5'-bisphosphate + H2O = AMP + phosphate. In terms of biological role, converts adenosine-3',5'-bisphosphate (PAP) to AMP. In Salmonella typhimurium (strain LT2 / SGSC1412 / ATCC 700720), this protein is 3'(2'),5'-bisphosphate nucleotidase CysQ.